A 465-amino-acid polypeptide reads, in one-letter code: Box C/D snoRNA protein 1 (465 aa).

A disordered region spans residues 1–72 (MEFAAENEGK…GSRQRPEEIP (72 aa)). S25 is subject to Phosphoserine. Residues 56-70 (EIGDGEEGSRQRPEE) show a composition bias toward basic and acidic residues. Glycyl lysine isopeptide (Lys-Gly) (interchain with G-Cter in SUMO2) cross-links involve residues K79, K108, K118, K138, K148, K157, K168, K178, and K195. The Zn(2+) site is built by C215, C218, C227, C230, C235, C239, H243, and C249. The HIT-type zinc-finger motif lies at 215–249 (CETCGTEEAKYRCPRCMRYSCSLPCVKKHKAELTC). A Glycyl lysine isopeptide (Lys-Gly) (interchain with G-Cter in SUMO2) cross-link involves residue K454.

It belongs to the BCD1 family. In terms of assembly, interacts with FBL, SNU13, NOP58, NUFIP1, RUVBL1, RUVBL2 and TAF9. Interacts (via HIT-type zinc finger) with the RUVBL1/RUVBL2 complex in the presence of ADP.

In terms of biological role, required for box C/D snoRNAs accumulation involved in snoRNA processing, snoRNA transport to the nucleolus and ribosome biogenesis. This is Box C/D snoRNA protein 1 (ZNHIT6) from Pongo abelii (Sumatran orangutan).